The primary structure comprises 137 residues: Transcription antitermination protein NusB (137 aa).

Belongs to the NusB family.

Functionally, involved in transcription antitermination. Required for transcription of ribosomal RNA (rRNA) genes. Binds specifically to the boxA antiterminator sequence of the ribosomal RNA (rrn) operons. The protein is Transcription antitermination protein NusB of Aeromonas hydrophila subsp. hydrophila (strain ATCC 7966 / DSM 30187 / BCRC 13018 / CCUG 14551 / JCM 1027 / KCTC 2358 / NCIMB 9240 / NCTC 8049).